The following is a 334-amino-acid chain: Ornithine carbamoyltransferase (334 aa).

Carbamoyl phosphate-binding positions include 56–59, Gln-83, Arg-107, and 134–137; these read STRT and HPTQ. L-ornithine is bound by residues Asn-168, Asp-232, and 236-237; that span reads SM. Carbamoyl phosphate is bound by residues 274–275 and Arg-320; that span reads CL.

The protein belongs to the aspartate/ornithine carbamoyltransferase superfamily. OTCase family.

It localises to the cytoplasm. It carries out the reaction carbamoyl phosphate + L-ornithine = L-citrulline + phosphate + H(+). It functions in the pathway amino-acid biosynthesis; L-arginine biosynthesis; L-arginine from L-ornithine and carbamoyl phosphate: step 1/3. Functionally, reversibly catalyzes the transfer of the carbamoyl group from carbamoyl phosphate (CP) to the N(epsilon) atom of ornithine (ORN) to produce L-citrulline. This is Ornithine carbamoyltransferase from Escherichia coli (strain 55989 / EAEC).